The primary structure comprises 516 residues: GPI mannosyltransferase 4 (516 aa).

At 1 to 5 (MMRYQ) the chain is on the lumenal side. The chain crosses the membrane as a helical span at residues 6 to 26 (WWLYLVYAIGLMLCLGPSYIH). Residues 27-60 (PDEHFQCIEILAMQFMKVKGTIPWEFKSKFAARS) lie on the Cytoplasmic side of the membrane. A helical transmembrane segment spans residues 61-81 (YGPLLLVYGPLFTILESFPEI). Topologically, residues 82–175 (QDNPALILYS…IQRSNFKNSV (94 aa)) are lumenal. A helical membrane pass occupies residues 176-196 (ILGLIFSFGVFNRVTFPAFIF). The Cytoplasmic portion of the chain corresponds to 197–210 (LPCLILFWKFYRVH). The chain crosses the membrane as a helical span at residues 211–231 (WKSFSLLLLSFSFSSCLFVLI). The Lumenal segment spans residues 232–270 (DTNIYNNGKGFVITPLNNLKYNLNVQNLQVHGLHPRYTH). A helical transmembrane segment spans residues 271-291 (LLVNLPQIVGPVLLLAIFSGY). At 292-295 (KLDK) the chain is on the cytoplasmic side. The helical transmembrane segment at 296–316 (LSTYAIISGLLFLSFFQHQEL) threads the bilayer. A topological domain (lumenal) is located at residue arginine 317. Residues 318–338 (FLVPLVPLLVTNLNWTPLSST) form a helical membrane-spanning segment. The Cytoplasmic portion of the chain corresponds to 339–348 (LVNKKIFKGT). The chain crosses the membrane as a helical span at residues 349 to 369 (WLLFNIIMAFIMGISHQAGII). Residues 370-516 (QFLGDYFHFR…GLTVYSIELL (147 aa)) lie on the Lumenal side of the membrane. N-linked (GlcNAc...) asparagine glycans are attached at residues asparagine 403 and asparagine 452.

It belongs to the glycosyltransferase 22 family. PIGZ subfamily.

Its subcellular location is the endoplasmic reticulum membrane. It functions in the pathway glycolipid biosynthesis; glycosylphosphatidylinositol-anchor biosynthesis. Its function is as follows. Alpha-1,2-mannosyltransferase involved in glycosylphosphatidylinositol-anchor biosynthesis. Transfers a fourth mannose to trimannosyl-GPIs during GPI precursor assembly. The presence of a fourth mannose in GPI is essential in fungi. Involved in plasmid maintenance with SMP2. This chain is GPI mannosyltransferase 4 (SMP3), found in Saccharomyces cerevisiae (strain ATCC 204508 / S288c) (Baker's yeast).